The sequence spans 521 residues: Glucose-6-phosphate isomerase (521 aa).

Glu-327 acts as the Proton donor in catalysis. Catalysis depends on residues His-358 and Lys-486.

This sequence belongs to the GPI family.

The protein resides in the cytoplasm. It catalyses the reaction alpha-D-glucose 6-phosphate = beta-D-fructose 6-phosphate. It functions in the pathway carbohydrate biosynthesis; gluconeogenesis. The protein operates within carbohydrate degradation; glycolysis; D-glyceraldehyde 3-phosphate and glycerone phosphate from D-glucose: step 2/4. In terms of biological role, catalyzes the reversible isomerization of glucose-6-phosphate to fructose-6-phosphate. This is Glucose-6-phosphate isomerase from Bordetella petrii (strain ATCC BAA-461 / DSM 12804 / CCUG 43448).